The primary structure comprises 347 residues: Twinfilin-2 (347 aa).

ADF-H domains follow at residues leucine 3–threonine 137 and glycine 175–histidine 311. The tract at residues glutamine 314–serine 347 is disordered. A compositionally biased stretch (gly residues) spans lysine 338–serine 347.

It belongs to the actin-binding proteins ADF family. Twinfilin subfamily. In terms of assembly, interacts with G-actin; ADP-actin form and capping protein (CP).

It is found in the cytoplasm. The protein localises to the cytoskeleton. Its subcellular location is the perinuclear region. Functionally, actin-binding protein involved in motile and morphological processes. Inhibits actin polymerization, likely by sequestering G-actin. The chain is Twinfilin-2 (twf2) from Danio rerio (Zebrafish).